We begin with the raw amino-acid sequence, 245 residues long: MDEKLLKTIAESKYLVALTGAGVSAESGIPTFRGKDGLWNRYRPEELANPQAFAKDPEKVWKWYAWRMEKVFNAQPNKAHQAFAELERLGVLKCLITQNVDDLHERAGSRNVIHLHGSLRVVRCTSCNNSFEVESAPKIPPLPKCDKCGSLLRPGVVWFGEMLPPDVLDRAMREVERADVIIVAGTSAVVQPAASLPLIVKQRGGAIIEINPDETPLTPIADYSLRGKAGEVMDELVRHVRKALS.

Positions 1–243 (MDEKLLKTIA…DELVRHVRKA (243 aa)) constitute a Deacetylase sirtuin-type domain. 20-39 (GAGVSAESGIPTFRGKDGLW) serves as a coordination point for NAD(+). Residues Tyr64 and Arg67 each contribute to the substrate site. 98–101 (QNVD) serves as a coordination point for NAD(+). The active-site Proton acceptor is His116. Residues Cys124, Cys127, Cys145, and Cys148 each coordinate Zn(2+). Residues 185 to 187 (GTS), 211 to 213 (NPD), and Ala229 each bind NAD(+).

It belongs to the sirtuin family. Class III subfamily. Requires Zn(2+) as cofactor.

The protein localises to the cytoplasm. It carries out the reaction N(6)-acetyl-L-lysyl-[protein] + NAD(+) + H2O = 2''-O-acetyl-ADP-D-ribose + nicotinamide + L-lysyl-[protein]. It catalyses the reaction N(6)-succinyl-L-lysyl-[protein] + NAD(+) + H2O = 2''-O-succinyl-ADP-D-ribose + nicotinamide + L-lysyl-[protein]. Its function is as follows. NAD-dependent lysine deacetylase and desuccinylase that specifically removes acetyl and succinyl groups on target proteins. Modulates the activities of several proteins which are inactive in their acylated form. Deacetylates the N-terminal lysine residue of Alba, the major archaeal chromatin protein and that, in turn, increases Alba's DNA binding affinity, thereby repressing transcription. In Archaeoglobus fulgidus (strain ATCC 49558 / DSM 4304 / JCM 9628 / NBRC 100126 / VC-16), this protein is NAD-dependent protein deacylase 1.